We begin with the raw amino-acid sequence, 171 residues long: Neuronal vesicle trafficking-associated protein 2 (171 aa).

The interval 1 to 21 is disordered; the sequence is MVKLNGNPGEKGAKPPSVEDG. Over 1–71 the chain is Cytoplasmic; the sequence is MVKLNGNPGE…FRVPKIAEFT (71 aa). A helical; Signal-anchor for type II membrane protein transmembrane segment spans residues 72-92; the sequence is VTILVSLALAFLACIVFLVVY. Residues 93–171 lie on the Lumenal side of the membrane; that stretch reads KAFTYDHSCP…EPKPPKTQGH (79 aa).

Belongs to the NSG family.

The protein localises to the membrane. The protein resides in the golgi apparatus. Its subcellular location is the trans-Golgi network membrane. It is found in the cell projection. It localises to the dendrite. The protein localises to the endosome membrane. The protein resides in the early endosome membrane. Its subcellular location is the late endosome membrane. It is found in the lysosome lumen. It localises to the cytoplasmic vesicle membrane. The protein localises to the golgi stack membrane. The protein resides in the endosome. Its subcellular location is the multivesicular body membrane. The sequence is that of Neuronal vesicle trafficking-associated protein 2 from Rattus norvegicus (Rat).